We begin with the raw amino-acid sequence, 375 residues long: Chaperone protein DnaJ (375 aa).

A J domain is found at Asp4–Gly68. Residues Gly134–Thr216 form a CR-type zinc finger. 8 residues coordinate Zn(2+): Cys147, Cys150, Cys164, Cys167, Cys190, Cys193, Cys204, and Cys207. 4 CXXCXGXG motif repeats span residues Cys147–Gly154, Cys164–Gly171, Cys190–Gly197, and Cys204–Gly211.

Belongs to the DnaJ family. As to quaternary structure, homodimer. Requires Zn(2+) as cofactor.

It localises to the cytoplasm. Functionally, participates actively in the response to hyperosmotic and heat shock by preventing the aggregation of stress-denatured proteins and by disaggregating proteins, also in an autonomous, DnaK-independent fashion. Unfolded proteins bind initially to DnaJ; upon interaction with the DnaJ-bound protein, DnaK hydrolyzes its bound ATP, resulting in the formation of a stable complex. GrpE releases ADP from DnaK; ATP binding to DnaK triggers the release of the substrate protein, thus completing the reaction cycle. Several rounds of ATP-dependent interactions between DnaJ, DnaK and GrpE are required for fully efficient folding. Also involved, together with DnaK and GrpE, in the DNA replication of plasmids through activation of initiation proteins. The protein is Chaperone protein DnaJ of Rippkaea orientalis (strain PCC 8801 / RF-1) (Cyanothece sp. (strain PCC 8801)).